Consider the following 181-residue polypeptide: Major urinary protein 20 (181 aa).

Residues 1–19 (MKLLVLLLCLGLTLVCVHA) form the signal peptide. Cysteine 83 and cysteine 176 are joined by a disulfide.

This sequence belongs to the calycin superfamily. Lipocalin family. Detected in urine of males but absent from female urine (at protein level).

Its subcellular location is the secreted. Male pheromone which stimulates female sexual attraction to male urinary scent and promotes a strong learned attraction to the airborne urinary odor of an individual male. Promotes spatial learning by rapidly conditioning preference for its remembered location among females and competitor males so that animals prefer to spend time in the site even when scent is absent. In addition to promoting a rapid attraction response, also elicits ultrasonic vocalizations and urinary scent marking in females which do not occur immediately after exposure. Stimulates hippocampal neurogenesis and cell proliferation in the subventricular zone in females. Promotes male aggressive behavior. Response to Mup20 is mediated by a neural circuit extending from the accessory olfactory bulb to a subset of nitric oxidase synthase-expressing neurons in the medial amygdala. As well as acting as a pheromone itself, binds most of the male pheromone, 2-sec-butyl-4,5-dihydrothiazole, in urine and is responsible for its slow release from scent marks. The chain is Major urinary protein 20 from Mus musculus (Mouse).